Reading from the N-terminus, the 207-residue chain is Protein GET1 (207 aa).

Topologically, residues 1–4 are lumenal; it reads MPSL. Residues 5–24 traverse the membrane as a helical segment; it reads LISVLFLHIAIYIINTIAAS. Over 25–110 the chain is Cytoplasmic; that stretch reads TIDSLLWLIY…FFDVAVKALR (86 aa). Positions 44-97 form a coiled coil; that stretch reads IAREQHQMKLEVVQLKREMNATSSQDEFAKWAKLRRRHDKALEEYEVKNKQFSR. A helical membrane pass occupies residues 111 to 131; the sequence is WAGTSGLIVFLQFWFSKTPIF. Residues 132–155 lie on the Lumenal side of the membrane; the sequence is TLPPSWIPWQVEWVLSFPRAPMGT. A helical transmembrane segment spans residues 156 to 172; it reads VSIQVWGGACAVVVALI. Topologically, residues 173–207 are cytoplasmic; it reads GEAIGATVRYLYASKDSMEAIKVGAGAVEKEKKRQ.

Belongs to the WRB/GET1 family. Interacts with GET3.

The protein localises to the endoplasmic reticulum membrane. Functionally, required for the post-translational delivery of tail-anchored (TA) proteins to the endoplasmic reticulum. Acts as a membrane receptor for soluble GET3, which recognizes and selectively binds the transmembrane domain of TA proteins in the cytosol. In Paracoccidioides brasiliensis (strain Pb18), this protein is Protein GET1.